We begin with the raw amino-acid sequence, 298 residues long: ATP synthase gamma chain (298 aa).

It belongs to the ATPase gamma chain family. In terms of assembly, F-type ATPases have 2 components, CF(1) - the catalytic core - and CF(0) - the membrane proton channel. CF(1) has five subunits: alpha(3), beta(3), gamma(1), delta(1), epsilon(1). CF(0) has three main subunits: a, b and c.

It is found in the cell membrane. In terms of biological role, produces ATP from ADP in the presence of a proton gradient across the membrane. The gamma chain is believed to be important in regulating ATPase activity and the flow of protons through the CF(0) complex. This chain is ATP synthase gamma chain, found in Parafrankia sp. (strain EAN1pec).